Here is a 116-residue protein sequence, read N- to C-terminus: Large ribosomal subunit protein bL20 (116 aa).

It belongs to the bacterial ribosomal protein bL20 family.

Binds directly to 23S ribosomal RNA and is necessary for the in vitro assembly process of the 50S ribosomal subunit. It is not involved in the protein synthesizing functions of that subunit. This chain is Large ribosomal subunit protein bL20, found in Mycoplasmopsis agalactiae (strain NCTC 10123 / CIP 59.7 / PG2) (Mycoplasma agalactiae).